Here is a 219-residue protein sequence, read N- to C-terminus: Ribose-5-phosphate isomerase A (219 aa).

Substrate is bound by residues Thr-28–Thr-31, Asp-81–Asp-84, and Lys-94–Gly-97. Glu-103 (proton acceptor) is an active-site residue. Lys-121 is a substrate binding site.

It belongs to the ribose 5-phosphate isomerase family. In terms of assembly, homodimer.

It carries out the reaction aldehydo-D-ribose 5-phosphate = D-ribulose 5-phosphate. The protein operates within carbohydrate degradation; pentose phosphate pathway; D-ribose 5-phosphate from D-ribulose 5-phosphate (non-oxidative stage): step 1/1. Catalyzes the reversible conversion of ribose-5-phosphate to ribulose 5-phosphate. The protein is Ribose-5-phosphate isomerase A of Shewanella frigidimarina (strain NCIMB 400).